A 239-amino-acid chain; its full sequence is Phosducin-like protein 3 (239 aa).

Met-1 carries the post-translational modification N-acetylmethionine. The Phosducin domain maps to 32-180; the sequence is EAEEEQRILQ…EGDIKAQFIG (149 aa). Residues Ser-43, Ser-234, and Ser-236 each carry the phosphoserine modification. The interval 91-239 is thioredoxin fold; it reads FGEVLEISGK…MKRDSDSEGD (149 aa).

This sequence belongs to the phosducin family. Interacts (via thioredoxin fold region) with KDR/VEGFR2 (via juxtamembrane domain). Forms ternary complexes with the chaperonin CCT complex and actin substrate, leading to inhibition of actin folding. Interacts with XIAP (via BIR 3 and RING domain). Interacts with HSP90AA1 and HSP90AB1. In terms of processing, N-terminal methionine acetylation destabilizes the protein.

Its subcellular location is the cytoplasm. It localises to the perinuclear region. The protein localises to the endoplasmic reticulum. In terms of biological role, acts as a chaperone for the angiogenic VEGF receptor KDR/VEGFR2, increasing its abundance by inhibiting its ubiquitination and degradation. Inhibits the folding activity of the chaperonin-containing T-complex (CCT) which leads to inhibition of cytoskeletal actin folding. Acts as a chaperone during heat shock alongside HSP90 and HSP40/70 chaperone complexes. Modulates the activation of caspases during apoptosis. In Pongo abelii (Sumatran orangutan), this protein is Phosducin-like protein 3 (PDCL3).